A 98-amino-acid chain; its full sequence is NADH-ubiquinone oxidoreductase chain 4L (98 aa).

Helical transmembrane passes span 1 to 21 (MSMVYANIFLAFIMSLMGLLV), 30 to 50 (LLCLEGMMLSLFVMMTVTILI), and 61 to 81 (IILLVFAACEAALGLSLLVMV).

It belongs to the complex I subunit 4L family. Core subunit of respiratory chain NADH dehydrogenase (Complex I) which is composed of 45 different subunits.

It localises to the mitochondrion inner membrane. It catalyses the reaction a ubiquinone + NADH + 5 H(+)(in) = a ubiquinol + NAD(+) + 4 H(+)(out). In terms of biological role, core subunit of the mitochondrial membrane respiratory chain NADH dehydrogenase (Complex I) which catalyzes electron transfer from NADH through the respiratory chain, using ubiquinone as an electron acceptor. Part of the enzyme membrane arm which is embedded in the lipid bilayer and involved in proton translocation. The protein is NADH-ubiquinone oxidoreductase chain 4L (MT-ND4L) of Pagophilus groenlandicus (Harp seal).